The following is a 101-amino-acid chain: Large ribosomal subunit protein uL23 (101 aa).

The protein belongs to the universal ribosomal protein uL23 family. Part of the 50S ribosomal subunit. Contacts protein L29, and trigger factor when it is bound to the ribosome.

One of the early assembly proteins it binds 23S rRNA. One of the proteins that surrounds the polypeptide exit tunnel on the outside of the ribosome. Forms the main docking site for trigger factor binding to the ribosome. In Corynebacterium diphtheriae (strain ATCC 700971 / NCTC 13129 / Biotype gravis), this protein is Large ribosomal subunit protein uL23.